A 225-amino-acid polypeptide reads, in one-letter code: Recoverin family protein DDB_G0274781 (225 aa).

Residues 1-13 show a composition bias toward low complexity; the sequence is MGNKQGKSPNNSK. A disordered region spans residues 1–20; that stretch reads MGNKQGKSPNNSKGGKKYKI. The N-myristoyl glycine moiety is linked to residue Gly2. EF-hand domains are found at residues 78-113, 114-149, and 174-209; these read DNSP…LCKG, TAEE…AWIS, and MAQI…HPKI. Positions 91, 93, 95, 97, 102, 127, 129, 131, 133, 138, 187, 189, 191, 193, and 198 each coordinate Ca(2+).

The protein belongs to the recoverin family.

In Dictyostelium discoideum (Social amoeba), this protein is Recoverin family protein DDB_G0274781.